Reading from the N-terminus, the 100-residue chain is Transcription and mRNA export factor SUS1 (100 aa).

This sequence belongs to the ENY2 family. In terms of assembly, component of the nuclear pore complex (NPC)-associated TREX-2 complex (transcription and export complex 2), composed of at least SUS1, SAC3, THP1, SEM1, and CDC31. TREX-2 contains 2 SUS1 chains. The TREX-2 complex interacts with the nucleoporin NUP1. Component of the 1.8 MDa SAGA transcription coactivator-HAT complex. SAGA is built of 5 distinct domains with specialized functions. Within the SAGA complex, SUS1, SGF11, SGF73 and UBP8 form an additional subcomplex of SAGA called the DUB module (deubiquitination module). Interacts directly with THP1, SAC3, SGF11, and with the RNA polymerase II.

Its subcellular location is the nucleus. The protein resides in the nucleoplasm. It localises to the cytoplasm. The protein localises to the P-body. Involved in mRNA export coupled transcription activation by association with both the TREX-2 and the SAGA complexes. At the promoters, SAGA is required for recruitment of the basal transcription machinery. It influences RNA polymerase II transcriptional activity through different activities such as TBP interaction and promoter selectivity, interaction with transcription activators, and chromatin modification through histone acetylation and deubiquitination. Within the SAGA complex, participates in a subcomplex required for deubiquitination of H2B and for the maintenance of steady-state H3 methylation levels. The TREX-2 complex functions in docking export-competent ribonucleoprotein particles (mRNPs) to the nuclear entrance of the nuclear pore complex (nuclear basket). TREX-2 participates in mRNA export and accurate chromatin positioning in the nucleus by tethering genes to the nuclear periphery. May also be involved in cytoplasmic mRNA decay by interaction with components of P-bodies. In Cryptococcus neoformans var. neoformans serotype D (strain B-3501A) (Filobasidiella neoformans), this protein is Transcription and mRNA export factor SUS1.